A 205-amino-acid chain; its full sequence is Small ribosomal subunit protein uS4 (205 aa).

The span at 1 to 16 shows a compositional bias: basic and acidic residues; sequence MSKRESSKYKIDRRMG. The interval 1–46 is disordered; that stretch reads MSKRESSKYKIDRRMGENIWGRPKSPVNRREYGPGQHGQRRKGKLS. In terms of domain architecture, S4 RNA-binding spans 94-157; it reads SRLDAIVYRA…KQLVTVLEAV (64 aa).

This sequence belongs to the universal ribosomal protein uS4 family. Part of the 30S ribosomal subunit. Contacts protein S5. The interaction surface between S4 and S5 is involved in control of translational fidelity.

Functionally, one of the primary rRNA binding proteins, it binds directly to 16S rRNA where it nucleates assembly of the body of the 30S subunit. Its function is as follows. With S5 and S12 plays an important role in translational accuracy. The polypeptide is Small ribosomal subunit protein uS4 (Rhizobium etli (strain CIAT 652)).